The sequence spans 152 residues: Transcriptional regulator MraZ (152 aa).

SpoVT-AbrB domains follow at residues 5 to 52 (ATLV…PLPE) and 81 to 124 (ASEC…DETT).

It belongs to the MraZ family. Forms oligomers.

The protein localises to the cytoplasm. The protein resides in the nucleoid. Negatively regulates its own expression and that of the subsequent genes in the proximal part of the division and cell wall (dcw) gene cluster. Acts by binding directly to DNA. May also regulate the expression of genes outside the dcw cluster. This chain is Transcriptional regulator MraZ, found in Escherichia fergusonii (strain ATCC 35469 / DSM 13698 / CCUG 18766 / IAM 14443 / JCM 21226 / LMG 7866 / NBRC 102419 / NCTC 12128 / CDC 0568-73).